Reading from the N-terminus, the 217-residue chain is CASP-like protein UU4 (217 aa).

Residues 1 to 11 show a composition bias toward basic and acidic residues; sequence MYTGQSDHRPE. The tract at residues 1–21 is disordered; the sequence is MYTGQSDHRPEGVGVNPGSPN. Residues 1–61 are Cytoplasmic-facing; it reads MYTGQSDHRP…VKKNINHMSG (61 aa). A helical transmembrane segment spans residues 62 to 82; sequence LSLGLRVSEFVLSVIAFSLMA. Residues 83-98 are Extracellular-facing; it reads SAEQNGAVYSTFTSYS. A helical membrane pass occupies residues 99-119; the sequence is FVLAINVLVALYAIGQIILSV. The Cytoplasmic portion of the chain corresponds to 120–141; it reads MPLVSGSAPKKLYLFITFGCDQ. A helical membrane pass occupies residues 142 to 162; that stretch reads LSAFLLMAAGAAGASVAMLIN. Over 163 to 187 the chain is Extracellular; that stretch reads RKGVIDDYGSGCIDGKITVFCAHAE. The helical transmembrane segment at 188 to 208 threads the bilayer; the sequence is ASIAFTFLSFFCVMISSYLGV. The Cytoplasmic portion of the chain corresponds to 209-217; that stretch reads YNLAPYLIL.

This sequence belongs to the Casparian strip membrane proteins (CASP) family. As to quaternary structure, homodimer and heterodimers.

The protein localises to the cell membrane. The chain is CASP-like protein UU4 from Physcomitrium patens (Spreading-leaved earth moss).